We begin with the raw amino-acid sequence, 423 residues long: MTDDTEYRCSFCGKEHHQVDDLIAGPDVRICSECVVLSCEIVEDRRNEALAKQDAFIKRKQRSVLEGLPKPAEIYAFLDEYVIGQQKAKRDLSVAVYNHYKRLVSTKSESENEVELSKSNILLIGPTGCGKTYLAQTLARMLRVPFAVADATALTEAGYVGDDVENVLLKLLQDADFDITRAEAGIVCIDEIDKISRKADSPSITRDVSGEGVQQALLKILEGTVASVPLQGGKKHTQYEQASINTRNILFIVAGAFSGIEEIISSRIGRSNMGFGSDLLRKDTDVFDQILPEDLRKFGLIPEFIGRLPIVTAISHLDGEDMIRVLTEPKNALVKQYKRLFSLDGVSLGFDHEALEAIVELALKRKTGARALRSVMESILSPIMFDVPSRGDIESVRITAETVAGGGPHLTMRCARSNYIRSA.

The 50-residue stretch at 1-50 folds into the ClpX-type ZB domain; the sequence is MTDDTEYRCSFCGKEHHQVDDLIAGPDVRICSECVVLSCEIVEDRRNEAL. The Zn(2+) site is built by cysteine 9, cysteine 12, cysteine 31, and cysteine 34. 126–133 contacts ATP; that stretch reads PTGCGKTY.

It belongs to the ClpX chaperone family. As to quaternary structure, component of the ClpX-ClpP complex. Forms a hexameric ring that, in the presence of ATP, binds to fourteen ClpP subunits assembled into a disk-like structure with a central cavity, resembling the structure of eukaryotic proteasomes.

ATP-dependent specificity component of the Clp protease. It directs the protease to specific substrates. Can perform chaperone functions in the absence of ClpP. This chain is ATP-dependent Clp protease ATP-binding subunit ClpX, found in Tropheryma whipplei (strain Twist) (Whipple's bacillus).